A 268-amino-acid polypeptide reads, in one-letter code: MAFATYEERASVHASPVASKLLRIMASKKTNLCASLDVRTTAELLSLVDQVGPYICLLKTHVDILDDFSMEGTVKPLKELAAKYNFLIFEDRKFADIGNTVKLQYSSGVYKIVQWADITNAHGVTGSGIVKGLKEAAQENSDEPRGLLMLAELSSKGSLAHGEYTTGTVEIAKTDKQFVFGFIAQRGMGGRDEGFDWLIMTPGVGLDDKGDALGQQYRTVDDVVSTGSDIIIVGRGLFGKGRDPTAESRRYRDAGWDAYLKRCNAASN.

Substrate is bound by residues Asp-37, 59–61, 91–100, Tyr-217, and Arg-235; these read KTH and DRKFADIGNT. The active-site Proton donor is the Lys-93.

This sequence belongs to the OMP decarboxylase family.

The catalysed reaction is orotidine 5'-phosphate + H(+) = UMP + CO2. It functions in the pathway pyrimidine metabolism; UMP biosynthesis via de novo pathway; UMP from orotate: step 2/2. The polypeptide is Orotidine 5'-phosphate decarboxylase (URA4) (Maudiozyma exigua (Yeast)).